A 422-amino-acid chain; its full sequence is UDP-N-acetylglucosamine 1-carboxyvinyltransferase (422 aa).

22–23 (KN) is a binding site for phosphoenolpyruvate. Arg92 contacts UDP-N-acetyl-alpha-D-glucosamine. Cys116 functions as the Proton donor in the catalytic mechanism. Cys116 is subject to 2-(S-cysteinyl)pyruvic acid O-phosphothioketal. UDP-N-acetyl-alpha-D-glucosamine contacts are provided by residues 121-125 (RPVDL), Asp307, and Leu329.

The protein belongs to the EPSP synthase family. MurA subfamily.

It localises to the cytoplasm. The enzyme catalyses phosphoenolpyruvate + UDP-N-acetyl-alpha-D-glucosamine = UDP-N-acetyl-3-O-(1-carboxyvinyl)-alpha-D-glucosamine + phosphate. Its pathway is cell wall biogenesis; peptidoglycan biosynthesis. Cell wall formation. Adds enolpyruvyl to UDP-N-acetylglucosamine. The chain is UDP-N-acetylglucosamine 1-carboxyvinyltransferase from Aliarcobacter butzleri (strain RM4018) (Arcobacter butzleri).